Reading from the N-terminus, the 121-residue chain is Large ribosomal subunit protein uL22 (121 aa).

The protein belongs to the universal ribosomal protein uL22 family. Part of the 50S ribosomal subunit.

This protein binds specifically to 23S rRNA; its binding is stimulated by other ribosomal proteins, e.g. L4, L17, and L20. It is important during the early stages of 50S assembly. It makes multiple contacts with different domains of the 23S rRNA in the assembled 50S subunit and ribosome. Functionally, the globular domain of the protein is located near the polypeptide exit tunnel on the outside of the subunit, while an extended beta-hairpin is found that lines the wall of the exit tunnel in the center of the 70S ribosome. This chain is Large ribosomal subunit protein uL22, found in Paenarthrobacter aurescens (strain TC1).